The primary structure comprises 130 residues: Small ribosomal subunit protein uS11 (130 aa).

It belongs to the universal ribosomal protein uS11 family. Part of the 30S ribosomal subunit. Interacts with proteins S7 and S18. Binds to IF-3.

Its function is as follows. Located on the platform of the 30S subunit, it bridges several disparate RNA helices of the 16S rRNA. Forms part of the Shine-Dalgarno cleft in the 70S ribosome. This chain is Small ribosomal subunit protein uS11, found in Alteromonas mediterranea (strain DSM 17117 / CIP 110805 / LMG 28347 / Deep ecotype).